A 417-amino-acid polypeptide reads, in one-letter code: D-inositol 3-phosphate glycosyltransferase (417 aa).

Position 10 (H10) interacts with 1D-myo-inositol 3-phosphate. Residues 16–17 (QP) and G24 contribute to the UDP-N-acetyl-alpha-D-glucosamine site. 1D-myo-inositol 3-phosphate contacts are provided by residues 21–26 (DAGGMN), K79, Y112, T136, and R156. UDP-N-acetyl-alpha-D-glucosamine is bound by residues R230, K235, and Q296. Mg(2+) is bound by residues Y305, R306, and A308. E318 and E326 together coordinate UDP-N-acetyl-alpha-D-glucosamine. T332 is a binding site for Mg(2+).

Belongs to the glycosyltransferase group 1 family. MshA subfamily. In terms of assembly, homodimer.

It carries out the reaction 1D-myo-inositol 3-phosphate + UDP-N-acetyl-alpha-D-glucosamine = 1D-myo-inositol 2-acetamido-2-deoxy-alpha-D-glucopyranoside 3-phosphate + UDP + H(+). Functionally, catalyzes the transfer of a N-acetyl-glucosamine moiety to 1D-myo-inositol 3-phosphate to produce 1D-myo-inositol 2-acetamido-2-deoxy-glucopyranoside 3-phosphate in the mycothiol biosynthesis pathway. This Actinosynnema mirum (strain ATCC 29888 / DSM 43827 / JCM 3225 / NBRC 14064 / NCIMB 13271 / NRRL B-12336 / IMRU 3971 / 101) protein is D-inositol 3-phosphate glycosyltransferase.